Consider the following 868-residue polypeptide: Dolichyl-phosphooligosaccharide-protein glycotransferase 3 (868 aa).

The Cytoplasmic portion of the chain corresponds to Met-1–Val-16. Residues Leu-17–Val-36 form a helical membrane-spanning segment. Residues Phe-37–Ser-101 lie on the Extracellular side of the membrane. The short motif at Gly-45 to Asp-47 is the DXD motif 1 element. Residue Asp-47 participates in Mn(2+) binding. His-81 is an a glycophospholipid binding site. A helical membrane pass occupies residues Gly-102–Val-131. Topologically, residues Phe-132 to Asp-133 are cytoplasmic. A helical membrane pass occupies residues Lys-134–Gln-153. The Extracellular segment spans residues Arg-154–His-162. A Mn(2+)-binding site is contributed by Asp-161. The short motif at Asp-161–His-163 is the DXD motif 2 element. His-162 contributes to the a glycophospholipid binding site. His-163 lines the Mn(2+) pocket. A helical membrane pass occupies residues His-163 to Trp-184. Residues Lys-185–Ala-199 lie on the Cytoplasmic side of the membrane. The helical transmembrane segment at Tyr-200–Val-212 threads the bilayer. Topologically, residues Leu-213–Trp-215 are extracellular. Residues Gly-216 to Phe-238 form a helical membrane-spanning segment. Over Val-239–Ala-241 the chain is Cytoplasmic. A helical transmembrane segment spans residues Asp-242–Leu-262. The Extracellular segment spans residues Pro-263–Phe-279. Residues Gln-280–Val-303 form a helical membrane-spanning segment. Over Gly-304–Gly-312 the chain is Cytoplasmic. A helical transmembrane segment spans residues Arg-313–Leu-330. Residues Phe-331–Thr-373 lie on the Extracellular side of the membrane. Residues Thr-357–Glu-360 carry the TIXE motif motif. Residues Leu-374 to Ala-396 traverse the membrane as a helical segment. The Cytoplasmic segment spans residues Tyr-397–Ser-404. A helical membrane pass occupies residues Phe-405–Gly-423. Over Gln-424–Phe-427 the chain is Extracellular. Residue Arg-426 participates in a glycophospholipid binding. The helical transmembrane segment at Ala-428–Leu-452 threads the bilayer. The Cytoplasmic segment spans residues Tyr-453–Tyr-468. A helical transmembrane segment spans residues Phe-469–Ser-494. Topologically, residues Tyr-495–Leu-868 are extracellular. Residues Trp-550–Asp-552 form an interacts with target acceptor peptide in protein substrate region. The WWDYG motif motif lies at Trp-550–Gly-554. The DKi motif motif lies at Glu-613 to Met-622.

The protein belongs to the STT3 family. Requires Mg(2+) as cofactor. The cofactor is Mn(2+). Zn(2+) serves as cofactor.

It is found in the cell membrane. The catalysed reaction is an archaeal dolichyl phosphooligosaccharide + [protein]-L-asparagine = an archaeal dolichyl phosphate + a glycoprotein with the oligosaccharide chain attached by N-beta-D-glycosyl linkage to a protein L-asparagine.. It functions in the pathway protein modification; protein glycosylation. Oligosaccharyl transferase (OST) that catalyzes the initial transfer of a defined glycan (a glucose-linked heptasaccharide composed of 3 Glc, 2 Man, 2 Gal and a sulfate for A.fulgidus AglB-L) from the lipid carrier dolichol-monophosphate to an asparagine residue within an Asn-X-Ser/Thr consensus motif in nascent polypeptide chains, the first step in protein N-glycosylation. The polypeptide is Dolichyl-phosphooligosaccharide-protein glycotransferase 3 (aglB3) (Archaeoglobus fulgidus (strain ATCC 49558 / DSM 4304 / JCM 9628 / NBRC 100126 / VC-16)).